The chain runs to 354 residues: Ornithine cyclodeaminase (354 aa).

L-ornithine-binding residues include R53 and K77. Residues T92, R120, A147–Q148, D169, T209, V232–D235, K239, and S300 contribute to the NAD(+) site. R120 is a binding site for L-ornithine. D235 lines the L-ornithine pocket. D235 functions as the Proton donor/acceptor in the catalytic mechanism. V301 contributes to the L-ornithine binding site.

Belongs to the ornithine cyclodeaminase/mu-crystallin family. NAD(+) serves as cofactor.

The enzyme catalyses L-ornithine = L-proline + NH4(+). The protein operates within amino-acid biosynthesis; L-proline biosynthesis; L-proline from L-ornithine: step 1/1. Is subject to substrate inhibition. Is regulated by L-arginine, which stimulates enzymatic activity at 0.1-1 mM while inhibits activity at higher concentrations, and has pronounced effects on the optima for pH and temperature and on the Km for L-ornithine. Is not inhibited by L-proline. In terms of biological role, catalyzes the conversion of L-ornithine into L-proline with release of ammonia. Is involved in the utilization of nopaline, a catabolic pathway that proceeds through L-arginine and L-ornithine to L-proline. Nopaline is a predominant opine in plant cells transformed with Ti plasmid pTiC58. The chain is Ornithine cyclodeaminase from Agrobacterium fabrum (strain C58 / ATCC 33970) (Agrobacterium tumefaciens (strain C58)).